Consider the following 46-residue polypeptide: Esculentin-1R (46 aa).

An intrachain disulfide couples cysteine 40 to cysteine 46.

As to expression, expressed by the skin glands.

The protein localises to the secreted. Its function is as follows. Shows antibacterial activity against representative Gram-negative and Gram-positive bacterial species, and hemolytic activity. This is Esculentin-1R from Pelophylax ridibundus (Marsh frog).